The following is an 83-amino-acid chain: Small ribosomal subunit protein bS20 (83 aa).

The protein belongs to the bacterial ribosomal protein bS20 family.

Binds directly to 16S ribosomal RNA. In Leuconostoc mesenteroides subsp. mesenteroides (strain ATCC 8293 / DSM 20343 / BCRC 11652 / CCM 1803 / JCM 6124 / NCDO 523 / NBRC 100496 / NCIMB 8023 / NCTC 12954 / NRRL B-1118 / 37Y), this protein is Small ribosomal subunit protein bS20.